We begin with the raw amino-acid sequence, 350 residues long: Neutral protease 2 homolog SNOG_10522 (350 aa).

Residues 1 to 18 form the signal peptide; sequence MKVSSQLAVAALASFATA. Residues 19 to 180 constitute a propeptide that is removed on maturation; it reads ASVDVHKRET…AKALNKRTAI (162 aa). Disulfide bonds link cysteine 184–cysteine 251 and cysteine 258–cysteine 276. A Zn(2+)-binding site is contributed by histidine 301. Glutamate 302 is an active-site residue. The Zn(2+) site is built by histidine 305 and aspartate 316.

The protein belongs to the peptidase M35 family. The cofactor is Zn(2+).

It is found in the secreted. It carries out the reaction Preferential cleavage of bonds with hydrophobic residues in P1'. Also 3-Asn-|-Gln-4 and 8-Gly-|-Ser-9 bonds in insulin B chain.. Functionally, secreted metalloproteinase that allows assimilation of proteinaceous substrates. Shows high activities on basic nuclear substrates such as histone and protamine. The sequence is that of Neutral protease 2 homolog SNOG_10522 from Phaeosphaeria nodorum (strain SN15 / ATCC MYA-4574 / FGSC 10173) (Glume blotch fungus).